A 481-amino-acid chain; its full sequence is Argininosuccinate lyase (481 aa).

This sequence belongs to the lyase 1 family. Argininosuccinate lyase subfamily.

The protein localises to the cytoplasm. The catalysed reaction is 2-(N(omega)-L-arginino)succinate = fumarate + L-arginine. It participates in amino-acid biosynthesis; L-arginine biosynthesis; L-arginine from L-ornithine and carbamoyl phosphate: step 3/3. The chain is Argininosuccinate lyase from Methanococcus maripaludis (strain C5 / ATCC BAA-1333).